Here is a 367-residue protein sequence, read N- to C-terminus: Heme A synthase (367 aa).

5 helical membrane-spanning segments follow: residues 26–46 (IRGW…VGGA), 111–131 (LLAR…WVTG), 139–159 (LPLL…WWMV), 174–194 (LATH…IYRG), and 212–232 (AGAI…VAGL). His-274 provides a ligand contact to heme. Helical transmembrane passes span 276 to 296 (LGAY…LRAA), 305 to 325 (SVLL…TLLL), and 327 to 347 (VPIG…GFAI). His-335 provides a ligand contact to heme.

The protein belongs to the COX15/CtaA family. Type 2 subfamily. Interacts with CtaB. It depends on heme b as a cofactor.

The protein localises to the cell membrane. It carries out the reaction Fe(II)-heme o + 2 A + H2O = Fe(II)-heme a + 2 AH2. It functions in the pathway porphyrin-containing compound metabolism; heme A biosynthesis; heme A from heme O: step 1/1. Its function is as follows. Catalyzes the conversion of heme O to heme A by two successive hydroxylations of the methyl group at C8. The first hydroxylation forms heme I, the second hydroxylation results in an unstable dihydroxymethyl group, which spontaneously dehydrates, resulting in the formyl group of heme A. The chain is Heme A synthase from Rhizobium meliloti (strain 1021) (Ensifer meliloti).